We begin with the raw amino-acid sequence, 116 residues long: Toxin ICK-10 (116 aa).

The first 19 residues, 1–19 (MMKLYSLVIIATLAAAAFA), serve as a signal peptide directing secretion. Cystine bridges form between Cys-56–Cys-71, Cys-64–Cys-77, Cys-68–Cys-113, and Cys-70–Cys-84.

Belongs to the neurotoxin 25 family. ICK-8 subfamily. Expressed by the venom gland.

The protein resides in the secreted. In terms of biological role, ion channel inhibitor. In Trittame loki (Brush-footed trapdoor spider), this protein is Toxin ICK-10.